Here is a 132-residue protein sequence, read N- to C-terminus: Small ribosomal subunit protein uS8 (132 aa).

It belongs to the universal ribosomal protein uS8 family. Part of the 30S ribosomal subunit. Contacts proteins S5 and S12.

Its function is as follows. One of the primary rRNA binding proteins, it binds directly to 16S rRNA central domain where it helps coordinate assembly of the platform of the 30S subunit. This chain is Small ribosomal subunit protein uS8, found in Limosilactobacillus fermentum (strain NBRC 3956 / LMG 18251) (Lactobacillus fermentum).